We begin with the raw amino-acid sequence, 338 residues long: uncharacterized protein (338 aa).

Positions 1-29 are cleaved as a signal peptide; it reads MIKQLYKNITICTLALSTTFTVLPATSYA.

It belongs to the aerolysin family.

This is an uncharacterized protein from Staphylococcus aureus (strain MSSA476).